We begin with the raw amino-acid sequence, 165 residues long: REP-associated tyrosine transposase (165 aa).

It belongs to the transposase 17 family. RAYT subfamily. Monomer.

Cleavage occurs in the presence of magnesium, but is much more pronounced with manganese. Functionally, transposase that is always flanked by repeated extragenic palindrome (REP) sequences, which are clustered in structures called bacterial interspersed mosaic elements (BIMEs). RayT catalyzes cleavage and recombination of BIMEs. Binds REP sequences and cleaves BIMEs both upstream and downstream of the REP sequence. Could be important in the creation of BIME variability and amplification. This chain is REP-associated tyrosine transposase, found in Escherichia coli (strain K12).